The following is a 253-amino-acid chain: 28 kDa inner dynein arm light chain, axonemal (253 aa).

The interval threonine 19–proline 44 is disordered. Residues isoleucine 160 to valine 239 adopt a coiled-coil conformation.

Belongs to the inner dynein arm light chain family.

The protein resides in the cytoplasm. Its subcellular location is the cytoskeleton. It localises to the flagellum axoneme. Plays a dynamic role in flagellar motility. May be necessary for stable assembly of a subset of inner dynein arms or for the binding of these arms to the outer doublet microtubules of the axoneme. This chain is 28 kDa inner dynein arm light chain, axonemal (IDA4), found in Chlamydomonas reinhardtii (Chlamydomonas smithii).